The following is a 554-amino-acid chain: uncharacterized protein (554 aa).

This is an uncharacterized protein from Saccharomyces cerevisiae (strain ATCC 204508 / S288c) (Baker's yeast).